A 619-amino-acid chain; its full sequence is 1-deoxy-D-xylulose-5-phosphate synthase (619 aa).

Thiamine diphosphate-binding positions include His-74 and 115 to 117; that span reads GHS. Asp-146 serves as a coordination point for Mg(2+). Thiamine diphosphate-binding positions include 147 to 148, Asn-175, and Tyr-285; that span reads GA. Residue Asn-175 coordinates Mg(2+). The disordered stretch occupies residues 289–312; it reads EKSPSKYHAVPPRANEKEKPSKPC. Residues 302–312 show a composition bias toward basic and acidic residues; that stretch reads ANEKEKPSKPC. Residue Glu-365 coordinates thiamine diphosphate.

This sequence belongs to the transketolase family. DXPS subfamily. In terms of assembly, homodimer. It depends on Mg(2+) as a cofactor. Thiamine diphosphate is required as a cofactor.

It carries out the reaction D-glyceraldehyde 3-phosphate + pyruvate + H(+) = 1-deoxy-D-xylulose 5-phosphate + CO2. It participates in metabolic intermediate biosynthesis; 1-deoxy-D-xylulose 5-phosphate biosynthesis; 1-deoxy-D-xylulose 5-phosphate from D-glyceraldehyde 3-phosphate and pyruvate: step 1/1. Functionally, catalyzes the acyloin condensation reaction between C atoms 2 and 3 of pyruvate and glyceraldehyde 3-phosphate to yield 1-deoxy-D-xylulose-5-phosphate (DXP). This chain is 1-deoxy-D-xylulose-5-phosphate synthase, found in Clostridium botulinum (strain Eklund 17B / Type B).